A 541-amino-acid chain; its full sequence is Putative ammonium transporter sll0537 (541 aa).

11 consecutive transmembrane segments (helical) span residues 6–26 (TLWL…FMCL), 44–64 (FADF…IMFG), 86–106 (LAVF…IISG), 117–137 (YLLV…DWAW), 161–181 (FAGS…TILV), 203–223 (MPFS…FNGG), 235–255 (IMVN…LISL), 260–280 (MIQV…ITAS), 283–303 (VVMT…AYLV), 316–336 (VDAV…VGLF), and 356–376 (LLGI…FLTL).

The protein belongs to the ammonia transporter channel (TC 1.A.11.2) family.

It localises to the cell membrane. The protein is Putative ammonium transporter sll0537 of Synechocystis sp. (strain ATCC 27184 / PCC 6803 / Kazusa).